The following is a 390-amino-acid chain: 5-hydroxytryptamine receptor 1B (390 aa).

The segment at 1–21 (MEETGAQCAPPPPAGSQTGVS) is disordered. The Extracellular segment spans residues 1 to 46 (MEETGAQCAPPPPAGSQTGVSQVNLSAAPSHNCSTEGYVYQDSVAL). N24 and N32 each carry an N-linked (GlcNAc...) asparagine glycan. The helical transmembrane segment at 47-72 (PWKVLLVVLLALITLATTLSNAFVIA) threads the bilayer. Over 73–86 (TVYRTRKLHTPANY) the chain is Cytoplasmic. Residues 87–111 (LIASLAVTDLLVSILVMPISTMYVV) form a helical membrane-spanning segment. Topologically, residues 112-119 (TGRWTLGQ) are extracellular. The chain crosses the membrane as a helical span at residues 120–145 (VVCDFWLSSDITCCTASILHLCVIAL). C122 and C199 are joined by a disulfide. The ergotamine site is built by D129 and T134. A DRY motif; important for ligand-induced conformation changes and signaling motif is present at residues 146 to 148 (DRY). Over 146–165 (DRYWAITDAVEYSAKRTPKR) the chain is Cytoplasmic. Residues 166-184 (AAVMIALVWVFSISISLPP) traverse the membrane as a helical segment. Residues 185–205 (FFWRQAKAEEEVLDCLVNTDH) are Extracellular-facing. Ergotamine is bound at residue V201. Residues 206 to 229 (ILYTVYSTVGAFYFPTLLLIALYS) traverse the membrane as a helical segment. At 230-315 (RIYVEARSRI…AARERKATKT (86 aa)) the chain is on the cytoplasmic side. Positions 251–282 (LTRAQLMTDSPGSTSSVTSINSRAPDVPSESG) are disordered. Polar residues predominate over residues 255–272 (QLMTDSPGSTSSVTSINS). A helical membrane pass occupies residues 316 to 337 (LGIILGAFIVCWLPFFIISLVM). Residues 338-347 (PICKDACWFH) lie on the Extracellular side of the membrane. A helical membrane pass occupies residues 348–370 (LAIFDFFTWLGYLNSLINPIIYT). The short motif at 365–369 (NPIIY) is the NPxxY motif; important for ligand-induced conformation changes and signaling element. At 371-390 (MSNEDFKQAFHKLIRFKCAS) the chain is on the cytoplasmic side. C388 carries S-palmitoyl cysteine lipidation.

The protein belongs to the G-protein coupled receptor 1 family. Homodimer. Heterodimer with HTR1D. Post-translationally, phosphorylated. Desensitization of the receptor may be mediated by its phosphorylation. In terms of processing, palmitoylated.

It localises to the cell membrane. Its function is as follows. G-protein coupled receptor for 5-hydroxytryptamine (serotonin). Also functions as a receptor for ergot alkaloid derivatives, various anxiolytic and antidepressant drugs and other psychoactive substances, such as lysergic acid diethylamide (LSD). Ligand binding causes a conformation change that triggers signaling via guanine nucleotide-binding proteins (G proteins) and modulates the activity of downstream effectors, such as adenylate cyclase. HTR1B is coupled to G(i)/G(o) G alpha proteins and mediates inhibitory neurotransmission by inhibiting adenylate cyclase activity. Arrestin family members inhibit signaling via G proteins and mediate activation of alternative signaling pathways. Regulates the release of 5-hydroxytryptamine, dopamine and acetylcholine in the brain, and thereby affects neural activity, nociceptive processing, pain perception, mood and behavior. Besides, plays a role in vasoconstriction of cerebral arteries. The protein is 5-hydroxytryptamine receptor 1B (HTR1B) of Equus caballus (Horse).